The sequence spans 359 residues: Phospho-N-acetylmuramoyl-pentapeptide-transferase (359 aa).

A run of 10 helical transmembrane segments spans residues 3-23 (QILFAAGIALAVSILLTPVLI), 53-73 (GGVAILAGLWAGYWGSHLIGI), 84-104 (GLLVLGLTTALGGVGFLDDFI), 117-137 (TAKLVGQLIAAVAFGILALQF), 156-176 (IATVTMGSVVFVAFCYLLVSA), 187-207 (LDGLAAGSMSLVLGAYVIITF), 231-251 (LALICAAGAGACIGFLWWNAA), 255-275 (IFMGDTGSLALGGMLAGLSIT), 283-303 (VVIGALFVAEAASVVIQVAVF), and 330-350 (VIIRFWLLAAIASAIGLALFY).

This sequence belongs to the glycosyltransferase 4 family. MraY subfamily. The cofactor is Mg(2+).

The protein resides in the cell membrane. The catalysed reaction is UDP-N-acetyl-alpha-D-muramoyl-L-alanyl-gamma-D-glutamyl-meso-2,6-diaminopimeloyl-D-alanyl-D-alanine + di-trans,octa-cis-undecaprenyl phosphate = di-trans,octa-cis-undecaprenyl diphospho-N-acetyl-alpha-D-muramoyl-L-alanyl-D-glutamyl-meso-2,6-diaminopimeloyl-D-alanyl-D-alanine + UMP. The protein operates within cell wall biogenesis; peptidoglycan biosynthesis. Functionally, catalyzes the initial step of the lipid cycle reactions in the biosynthesis of the cell wall peptidoglycan: transfers peptidoglycan precursor phospho-MurNAc-pentapeptide from UDP-MurNAc-pentapeptide onto the lipid carrier undecaprenyl phosphate, yielding undecaprenyl-pyrophosphoryl-MurNAc-pentapeptide, known as lipid I. The protein is Phospho-N-acetylmuramoyl-pentapeptide-transferase of Rhodococcus opacus (strain B4).